A 525-amino-acid polypeptide reads, in one-letter code: Hydroxyneurosporene desaturase (525 aa).

This sequence belongs to the carotenoid/retinoid oxidoreductase family.

The enzyme catalyses rhodopin + A = (3E)-3,4-didehydrorhodopin + AH2. The protein operates within carotenoid biosynthesis; spheroidene biosynthesis. Functionally, catalyzes the introduction of C-3,4 double bonds into 1-hydroxyneurosporene (1-HO-Neu) to yield demethylspheroidene (DMS). The preferred substrates are 1-hydroxy-neurosporene, 1-hydroxy-lycopene and 1,1-dihydroxyneurosporene, however the 3,4-didehydrolycopene derivatives such as 1,1-dihydroxy-3,4-didehydrolycopene, 1-methoxy-1-hydroxy-3,4-didehydrolycopene and 1-hydroxy-3,4-didehydrolycopene are also efficiently converted. 1-HO-carotene derivatives can be also used. This is Hydroxyneurosporene desaturase (crtD) from Rubrivivax gelatinosus (Rhodocyclus gelatinosus).